The sequence spans 110 residues: Bowman-Birk type proteinase inhibitor (110 aa).

Positions 1–19 are cleaved as a signal peptide; sequence MVVLKVCLVLLFLVGGTTS. The propeptide occupies 20 to 39; sequence ANLRLSKLGLLMKSDHQHSN. Intrachain disulfides connect cysteine 47/cysteine 101, cysteine 48/cysteine 63, cysteine 51/cysteine 97, cysteine 53/cysteine 61, cysteine 71/cysteine 78, cysteine 75/cysteine 90, and cysteine 80/cysteine 88.

The protein belongs to the Bowman-Birk serine protease inhibitor family.

Inhibitor of trypsin and of chymotrypsin. This is Bowman-Birk type proteinase inhibitor from Glycine max (Soybean).